We begin with the raw amino-acid sequence, 123 residues long: Small ribosomal subunit protein eS8 (123 aa).

Residues Met1–Gly37 form a disordered region. Residues Ser7–Gln26 are compositionally biased toward basic residues.

This sequence belongs to the eukaryotic ribosomal protein eS8 family. As to quaternary structure, part of the 30S ribosomal subunit.

The polypeptide is Small ribosomal subunit protein eS8 (Halorubrum lacusprofundi (strain ATCC 49239 / DSM 5036 / JCM 8891 / ACAM 34)).